The sequence spans 644 residues: Heat shock protein SSC3, mitochondrial (644 aa).

The protein belongs to the heat shock protein 70 family.

The protein resides in the mitochondrion matrix. It is found in the mitochondrion nucleoid. Functionally, plays a role in facilitating the assembly of some protein complexes inside the mitochondria. It may initiate the events that lead to refolding of imported precursors in the matrix space. The polypeptide is Heat shock protein SSC3, mitochondrial (ECM10) (Saccharomyces cerevisiae (strain ATCC 204508 / S288c) (Baker's yeast)).